The following is a 418-amino-acid chain: Glutamyl-tRNA reductase (418 aa).

Substrate is bound by residues 49–52, S107, 112–114, and Q118; these read TCNR and EPQ. C50 acts as the Nucleophile in catalysis. 187–192 is a binding site for NADP(+); it reads GAGETI.

The protein belongs to the glutamyl-tRNA reductase family. Homodimer.

It catalyses the reaction (S)-4-amino-5-oxopentanoate + tRNA(Glu) + NADP(+) = L-glutamyl-tRNA(Glu) + NADPH + H(+). Its pathway is porphyrin-containing compound metabolism; protoporphyrin-IX biosynthesis; 5-aminolevulinate from L-glutamyl-tRNA(Glu): step 1/2. Functionally, catalyzes the NADPH-dependent reduction of glutamyl-tRNA(Glu) to glutamate 1-semialdehyde (GSA). The sequence is that of Glutamyl-tRNA reductase from Vibrio campbellii (strain ATCC BAA-1116).